The primary structure comprises 135 residues: Race-specific elicitor A4 (135 aa).

The first 18 residues, 1–18, serve as a signal peptide directing secretion; sequence MHYTTLLLSTLLVGTALA. Residues 19-29 constitute a propeptide that is removed on maturation; the sequence is QPTNPPAKTPK. Residues 19 to 39 are disordered; it reads QPTNPPAKTPKKAPKTQPYNP. One can recognise a Chitin-binding type-2 domain in the interval 47–111; the sequence is DTKCMGPKDC…DYPNLSTCPV (65 aa). Cysteines 86 and 101 form a disulfide. A disordered region spans residues 112–135; sequence KTPQPKPKKGGVGGKKASVGHPGY.

This necrosis-inducing peptide induces a hypersensitive response on Cf-4 tomato genotypes. Race-specific elicitors are compounds which only induce defense responses in genotypes of host plants which are resistant to the pathogenic race that produces the elicitor, but not in susceptible genotypes. The protein is Race-specific elicitor A4 (AVR4) of Passalora fulva (Tomato leaf mold).